Here is a 106-residue protein sequence, read N- to C-terminus: uncharacterized protein (106 aa).

The span at 24–35 (ANSISSTSFYHK) shows a compositional bias: polar residues. Disordered stretches follow at residues 24-49 (ANSI…SCEE) and 65-87 (LTAE…SSDE). 2 stretches are compositionally biased toward low complexity: residues 36-46 (SSNNNSHANAS) and 74-85 (SLSASNQPASSS).

This is an uncharacterized protein from Arabidopsis thaliana (Mouse-ear cress).